The following is a 605-amino-acid chain: DNA mismatch repair protein MutL (605 aa).

The protein belongs to the DNA mismatch repair MutL/HexB family.

Its function is as follows. This protein is involved in the repair of mismatches in DNA. It is required for dam-dependent methyl-directed DNA mismatch repair. May act as a 'molecular matchmaker', a protein that promotes the formation of a stable complex between two or more DNA-binding proteins in an ATP-dependent manner without itself being part of a final effector complex. The protein is DNA mismatch repair protein MutL of Exiguobacterium sp. (strain ATCC BAA-1283 / AT1b).